We begin with the raw amino-acid sequence, 2885 residues long: Chromodomain-helicase-DNA-binding protein 9 (2885 aa).

A disordered region spans residues 173–195 (QCSSLHSQQSRSNLNPGQNSLGQ). Residue lysine 197 forms a Glycyl lysine isopeptide (Lys-Gly) (interchain with G-Cter in SUMO2) linkage. 3 disordered regions span residues 242 to 263 (CSSHQEGNYNRPSPSMTSCSVS), 283 to 347 (SLLQ…QGNY), and 479 to 677 (CLQR…QPLQ). Polar residues-rich tracts occupy residues 243–263 (SSHQEGNYNRPSPSMTSCSVS) and 283–310 (SLLQSSAGLAPGHTNQALSDFAGSNSFS). Residues 323-334 (LLNPTPSLNSNN) are compositionally biased toward low complexity. Polar residues-rich tracts occupy residues 335 to 347 (FQILHSSHPQGNY) and 483 to 505 (QPPSSKKSDGSGTYTKLQNTQVR). Lysine 498 bears the N6-acetyllysine mark. 2 stretches are compositionally biased toward basic and acidic residues: residues 507 to 526 (MSEKKPRKRVESESKQEKAN) and 534 to 544 (ARAKERGERNI). The residue at position 549 (serine 549) is a Phosphoserine. Over residues 572–592 (KPKDRDNKKPKTYSKLKEKTK) the composition is skewed to basic and acidic residues. A Glycyl lysine isopeptide (Lys-Gly) (interchain with G-Cter in SUMO2) cross-link involves residue lysine 595. Phosphoserine is present on serine 610. The span at 617–630 (AEQRSQHTFKEQHS) shows a compositional bias: basic and acidic residues. Positions 631–643 (QKRRSNRQIKRKK) are enriched in basic residues. Basic and acidic residues predominate over residues 644-659 (YAEDAEGKQSEEEVKG). 2 Chromo domains span residues 689–760 (AIVD…HFLA) and 772–838 (VEVD…HLDR). The LXXLL motif 1 signature appears at 867–871 (LNWLL). The Helicase ATP-binding domain maps to 871–1045 (LFNWYNRRNC…FSLLHFLEPL (175 aa)). Position 884 to 891 (884 to 891 (DEMGLGKT)) interacts with ATP. The short motif at 996 to 999 (DEAH) is the DEAH box element. An LXXLL motif 2 motif is present at residues 1035–1039 (LFSLL). Positions 1185-1336 (LIDKLLPKMK…KAVLQSMSGR (152 aa)) constitute a Helicase C-terminal domain. The tract at residues 1460-1484 (KDELAELSEAESEGEEKPKLRRPCD) is disordered. Residues 1464 to 1473 (AELSEAESEG) show a composition bias toward acidic residues. Residues serine 1467 and serine 1471 each carry the phosphoserine modification. The span at 1474–1484 (EEKPKLRRPCD) shows a compositional bias: basic and acidic residues. Glycyl lysine isopeptide (Lys-Gly) (interchain with G-Cter in SUMO2) cross-links involve residues lysine 1587, lysine 1737, and lysine 1902. Serine 2025 is modified (phosphoserine). The LXXLL motif 3 motif lies at 2030 to 2034 (LPRLL). Lysine 2037 is covalently cross-linked (Glycyl lysine isopeptide (Lys-Gly) (interchain with G-Cter in SUMO2)). The disordered stretch occupies residues 2046 to 2238 (VKSESLTEEP…TQDSFQANNG (193 aa)). Serine 2057 and serine 2058 each carry phosphoserine. Lysine 2073 is covalently cross-linked (Glycyl lysine isopeptide (Lys-Gly) (interchain with G-Cter in SUMO2)). 2 positions are modified to phosphoserine: serine 2074 and serine 2078. Residues 2083 to 2092 (VLSQATGDQK) are compositionally biased toward polar residues. The segment covering 2093–2103 (SGGKSETDRRM) has biased composition (basic and acidic residues). The span at 2127–2193 (SQSSSDSDSD…SSSSSSSSSS (67 aa)) shows a compositional bias: low complexity. Residues 2201–2215 (DVQKREGTPHRKAYD) show a composition bias toward basic and acidic residues. The span at 2220–2238 (ASLSTTQDETQDSFQANNG) shows a compositional bias: polar residues. Positions 2331-2471 (QMSKVKKHVR…LSYPQPQRIP (141 aa)) are binds A/T-rich DNA. Glycyl lysine isopeptide (Lys-Gly) (interchain with G-Cter in SUMO2) cross-links involve residues lysine 2349, lysine 2355, and lysine 2360. The segment at 2428-2435 (KKRRGRRR) is a.T hook-like. The tract at residues 2473-2494 (TESPVPVINLKDGTRLAGDDAP) is disordered. Residues 2484-2494 (DGTRLAGDDAP) are compositionally biased toward basic and acidic residues. The LXXLL motif 4 motif lies at 2710-2714 (LPNLL). The interval 2724 to 2770 (AESGAEEKRGNDSKELEGKKERTESQSPENGGERCVPGSPSTSSTAA) is disordered. Over residues 2728–2747 (AEEKRGNDSKELEGKKERTE) the composition is skewed to basic and acidic residues. The short motif at 2782 to 2786 (LNPLL) is the LXXLL motif 5 element. Residues 2818–2847 (KNKSDDLDSSKSVEIKEENSRVRDQEEKGG) show a composition bias toward basic and acidic residues. Positions 2818–2885 (KNKSDDLDSS…SEDSDSSNED (68 aa)) are disordered. A Glycyl lysine isopeptide (Lys-Gly) (interchain with G-Cter in SUMO2) cross-link involves residue lysine 2833. The segment covering 2864–2876 (RASSGSDSSSSSS) has biased composition (low complexity).

It belongs to the SNF2/RAD54 helicase family. Interacts with PPARA. Probably interacts with ESR1 and NR1I3. In terms of processing, phosphorylated on serine and tyrosine residues. As to expression, expressed in osteoprogenitor cells during development and in mature bone (at protein level).

It is found in the cytoplasm. The protein resides in the nucleus. It catalyses the reaction ATP + H2O = ADP + phosphate + H(+). Probable ATP-dependent chromatin-remodeling factor. Acts as a transcriptional coactivator for PPARA and possibly other nuclear receptors. Has DNA-dependent ATPase activity and binds to A/T-rich DNA. Associates with A/T-rich regulatory regions in promoters of genes that participate in the differentiation of progenitors during osteogenesis. The sequence is that of Chromodomain-helicase-DNA-binding protein 9 (Chd9) from Mus musculus (Mouse).